The chain runs to 92 residues: Acylphosphatase (92 aa).

An Acylphosphatase-like domain is found at 3-92 (TKHVLVSGIV…GPRSTHFEVT (90 aa)). Active-site residues include Arg18 and Asn36.

This sequence belongs to the acylphosphatase family.

It carries out the reaction an acyl phosphate + H2O = a carboxylate + phosphate + H(+). This is Acylphosphatase (acyP) from Alcanivorax borkumensis (strain ATCC 700651 / DSM 11573 / NCIMB 13689 / SK2).